Here is a 213-residue protein sequence, read N- to C-terminus: MSILSIVLTGFGLAMDAFAVSVAKGITLTRVKAKDALKVALFFGGFQALMPLIGWGAGRYFADYIKAFDHWIAFILLSFIGGKMIFEALKEDDEEKAEVAVSMEVSKNKEREFANMKRKEELSAKNLTVLAIATSIDALAVGVSFAFLGISIVQTIIIIGIITFVLCFLGVIIGEKLGDIFKNYAEIVGGVILILIGINILLEHTGIIEKLFS.

The next 6 membrane-spanning stretches (helical) occupy residues 3-23 (ILSIVLTGFGLAMDAFAVSVA), 36-56 (ALKVALFFGGFQALMPLIGWG), 67-87 (AFDHWIAFILLSFIGGKMIFE), 130-150 (LAIATSIDALAVGVSFAFLGI), 152-172 (IVQTIIIIGIITFVLCFLGVI), and 187-207 (IVGGVILILIGINILLEHTGI).

It belongs to the MntP (TC 9.B.29) family.

The protein localises to the cell membrane. Functionally, probably functions as a manganese efflux pump. The sequence is that of Putative manganese efflux pump MntP from Clostridium perfringens (strain 13 / Type A).